A 210-amino-acid chain; its full sequence is Molybdenum cofactor guanylyltransferase (210 aa).

GTP-binding positions include 14–16, K27, N55, D73, and D108; that span reads LAG. Mg(2+) is bound at residue D108.

Belongs to the MobA family. As to quaternary structure, monomer. Mg(2+) serves as cofactor.

It is found in the cytoplasm. It carries out the reaction Mo-molybdopterin + GTP + H(+) = Mo-molybdopterin guanine dinucleotide + diphosphate. Its function is as follows. Transfers a GMP moiety from GTP to Mo-molybdopterin (Mo-MPT) cofactor (Moco or molybdenum cofactor) to form Mo-molybdopterin guanine dinucleotide (Mo-MGD) cofactor. This chain is Molybdenum cofactor guanylyltransferase, found in Rhodopseudomonas palustris (strain BisB5).